A 225-amino-acid chain; its full sequence is Ras-related protein Rab-21 (225 aa).

Ala-2 is subject to N-acetylalanine. GTP-binding residues include Gly-28, Gly-31, Lys-32, Thr-33, Ser-34, Asn-45, Asp-46, His-48, Thr-50, and Thr-51. Thr-33 is a Mg(2+) binding site. The Switch 1 signature appears at 43–56 (KFNDKHITTLQASF). Mg(2+) is bound by residues Thr-51 and Asp-74. The Switch 2 signature appears at 76–94 (AGQERFHALGPIYYRDSNG). 6 residues coordinate GTP: Gly-77, Asn-132, Lys-133, Asp-135, Ala-163, and Lys-164. Residues 188–225 (ERAKGNGSSQPGTARRGVQIIDDEPQAQTSGGGCCSSG) are disordered. Residues Cys-221 and Cys-222 are each lipidated (S-geranylgeranyl cysteine). Cys-222 is modified (cysteine methyl ester). A propeptide spans 223–225 (SSG) (removed in mature form).

Belongs to the small GTPase superfamily. Rab family. Interacts with the cytoplasmic tail of integrins ITGA1, ITGA2, ITGA5, ITGA6, ITGA11 and ITGB1. Interacts with RABGEF1 (via VPS9 domain). Interacts with ANKRD27. Interacts with VAMP7. Interacts (in GTP-bound form) with VAMP8 in response to starvation; the interaction probably regulates VAMP8 endolysosomal trafficking. Interacts (active GTP-bound form) with TMED10; the interaction is indirect and regulates TMED10 abundance and localization at the Golgi. Requires Mg(2+) as cofactor. As to expression, widely expressed. In jejunal tissue, predominantly expressed in the apical region of the epithelial cell layer of the villi, weak expression, if any, in the crypt epithelium. Capillary endothelium and some cell types in the lamina propria also show expression.

It localises to the endoplasmic reticulum membrane. The protein resides in the golgi apparatus. Its subcellular location is the trans-Golgi network. The protein localises to the golgi apparatus membrane. It is found in the early endosome membrane. It localises to the cytoplasmic vesicle membrane. The protein resides in the cleavage furrow. Its subcellular location is the cell projection. The protein localises to the neuron projection. It catalyses the reaction GTP + H2O = GDP + phosphate + H(+). Regulated by guanine nucleotide exchange factors (GEFs) including ANKRD27 and RABGEF1, which promote the exchange of bound GDP for free GTP. Regulated by GTPase activating proteins (GAPs) which increase the GTP hydrolysis activity. Inhibited by GDP dissociation inhibitors (GDIs). Functionally, the small GTPases Rab are key regulators of intracellular membrane trafficking, from the formation of transport vesicles to their fusion with membranes. Rabs cycle between an inactive GDP-bound form and an active GTP-bound form that is able to recruit to membranes different sets of downstream effectors directly responsible for vesicle formation, movement, tethering and fusion. RAB21 is involved in membrane trafficking control. During the mitosis of adherent cells, controls the endosomal trafficking of integrins which is required for the successful completion of cytokinesis. Regulates integrin internalization and recycling, but does not influence the traffic of endosomally translocated receptors in general. As a result, may regulate cell adhesion and migration. Involved in neurite growth. Following SBF2/MTMT13-mediated activation in response to starvation-induced autophagy, binds to and regulates SNARE protein VAMP8 endolysosomal transport required for SNARE-mediated autophagosome-lysosome fusion. Modulates protein levels of the cargo receptors TMED2 and TMED10, and required for appropriate Golgi localization of TMED10. The polypeptide is Ras-related protein Rab-21 (Homo sapiens (Human)).